The following is a 115-amino-acid chain: UPF0738 protein SE_0694 (115 aa).

It belongs to the UPF0738 family.

This chain is UPF0738 protein SE_0694, found in Staphylococcus epidermidis (strain ATCC 12228 / FDA PCI 1200).